Reading from the N-terminus, the 152-residue chain is UPF0266 membrane protein YobD (152 aa).

The next 3 helical transmembrane spans lie at 6-26, 45-65, and 67-87; these read LVLILFIAALLAYALYDQFIM, VDSVIFVGLVAILIYNNVTSH, and AQMTTWLLSALALMGFYIFWI.

This sequence belongs to the UPF0266 family.

It is found in the cell inner membrane. The chain is UPF0266 membrane protein YobD from Salmonella arizonae (strain ATCC BAA-731 / CDC346-86 / RSK2980).